We begin with the raw amino-acid sequence, 179 residues long: Large ribosomal subunit protein uL5 (179 aa).

It belongs to the universal ribosomal protein uL5 family. In terms of assembly, part of the 50S ribosomal subunit; part of the 5S rRNA/L5/L18/L25 subcomplex. Contacts the 5S rRNA and the P site tRNA. Forms a bridge to the 30S subunit in the 70S ribosome.

In terms of biological role, this is one of the proteins that bind and probably mediate the attachment of the 5S RNA into the large ribosomal subunit, where it forms part of the central protuberance. In the 70S ribosome it contacts protein S13 of the 30S subunit (bridge B1b), connecting the 2 subunits; this bridge is implicated in subunit movement. Contacts the P site tRNA; the 5S rRNA and some of its associated proteins might help stabilize positioning of ribosome-bound tRNAs. The chain is Large ribosomal subunit protein uL5 from Desulfitobacterium hafniense (strain Y51).